Here is a 316-residue protein sequence, read N- to C-terminus: Transaldolase (316 aa).

K125 (schiff-base intermediate with substrate) is an active-site residue.

This sequence belongs to the transaldolase family. Type 1 subfamily. As to quaternary structure, homodimer.

Its subcellular location is the cytoplasm. It catalyses the reaction D-sedoheptulose 7-phosphate + D-glyceraldehyde 3-phosphate = D-erythrose 4-phosphate + beta-D-fructose 6-phosphate. It participates in carbohydrate degradation; pentose phosphate pathway; D-glyceraldehyde 3-phosphate and beta-D-fructose 6-phosphate from D-ribose 5-phosphate and D-xylulose 5-phosphate (non-oxidative stage): step 2/3. In terms of biological role, transaldolase is important for the balance of metabolites in the pentose-phosphate pathway. The sequence is that of Transaldolase from Acidovorax ebreus (strain TPSY) (Diaphorobacter sp. (strain TPSY)).